A 307-amino-acid polypeptide reads, in one-letter code: G-protein coupled receptor 35 (307 aa).

At M1 to N18 the chain is on the extracellular side. N-linked (GlcNAc...) asparagine glycosylation is found at N2 and N7. A helical transmembrane segment spans residues F19–L39. The Cytoplasmic segment spans residues W40–R53. The helical transmembrane segment at I54–L74 threads the bilayer. Residues Y75–Q88 lie on the Extracellular side of the membrane. The cysteines at positions 87 and 160 are disulfide-linked. A helical membrane pass occupies residues L89–V110. Residues D111–R129 are Cytoplasmic-facing. The helical transmembrane segment at Q130–W150 threads the bilayer. Topologically, residues R151–L176 are extracellular. The helical transmembrane segment at L177–L197 threads the bilayer. The Cytoplasmic portion of the chain corresponds to S198–M217. A helical transmembrane segment spans residues V218–V238. The Extracellular portion of the chain corresponds to Q239–L257. The chain crosses the membrane as a helical span at residues S258–M278. Residues A279–T307 lie on the Cytoplasmic side of the membrane. Residues S286, S292, S298, and S301 each carry the phosphoserine modification. A disordered region spans residues P288 to T307.

Belongs to the G-protein coupled receptor 1 family. Multiply phosphorylated in clusters of serines and threonines in the C-terminal tail. Phosphorylation of Ser-298 and Ser-301 is mediated by GRK5 and/or GRK6. In terms of tissue distribution, predominantly expressed in immune and gastrointestinal tissues. Strongly GPR35 expressed in colonic macrophages.

It localises to the cell membrane. In terms of biological role, G-protein coupled receptor that binds to several ligands including the tryptophan metabolite kynurenic acid (KYNA), lysophosphatidic acid (LPA) or 5-hydroxyindoleacetic acid (5-HIAA) with high affinity, leading to rapid and transient activation of numerous intracellular signaling pathways. Plays a role in neutrophil recruitment to sites of inflammation and bacterial clearance through the major serotonin metabolite 5-HIAA that acts as a physiological ligand. Stimulates lipid metabolism, thermogenic, and anti-inflammatory gene expression in adipose tissue once activated by kynurenic acid. In macrophages, activation by lysophosphatidic acid promotes GPR35-induced signaling with a distinct transcriptional profile characterized by TNF production associated with ERK and NF-kappa-B activation. In turn, induces chemotaxis of macrophages. In Mus musculus (Mouse), this protein is G-protein coupled receptor 35 (Gpr35).